The primary structure comprises 112 residues: Integration host factor subunit alpha (112 aa).

This sequence belongs to the bacterial histone-like protein family. In terms of assembly, heterodimer of an alpha and a beta chain.

Its function is as follows. This protein is one of the two subunits of integration host factor, a specific DNA-binding protein that functions in genetic recombination as well as in transcriptional and translational control. This is Integration host factor subunit alpha from Rhizobium etli (strain CIAT 652).